A 502-amino-acid polypeptide reads, in one-letter code: Glycerol kinase (502 aa).

Residue Thr14 coordinates ADP. 2 residues coordinate ATP: Thr14 and Thr15. Thr14 provides a ligand contact to sn-glycerol 3-phosphate. Arg18 lines the ADP pocket. Sn-glycerol 3-phosphate-binding residues include Arg84, Glu85, Tyr136, and Asp245. The glycerol site is built by Arg84, Glu85, Tyr136, Asp245, and Gln246. The ADP site is built by Thr267 and Gly314. The ATP site is built by Thr267, Gly314, Gln318, and Gly415. ADP is bound by residues Gly415 and Asn419.

This sequence belongs to the FGGY kinase family.

It catalyses the reaction glycerol + ATP = sn-glycerol 3-phosphate + ADP + H(+). It functions in the pathway polyol metabolism; glycerol degradation via glycerol kinase pathway; sn-glycerol 3-phosphate from glycerol: step 1/1. Its activity is regulated as follows. Inhibited by fructose 1,6-bisphosphate (FBP). Functionally, key enzyme in the regulation of glycerol uptake and metabolism. Catalyzes the phosphorylation of glycerol to yield sn-glycerol 3-phosphate. In Acaryochloris marina (strain MBIC 11017), this protein is Glycerol kinase.